Here is a 668-residue protein sequence, read N- to C-terminus: CLK4-associating serine/arginine rich protein (668 aa).

A Phosphoserine modification is found at Ser-101. Disordered regions lie at residues 173-232 (AEVE…GMAD) and 252-668 (AKAL…HYRH). A compositionally biased stretch (acidic residues) spans 182 to 214 (PEEEESPAEEESNSDEDEVIPDIDVEVDVDELN). Residues 265–283 (RRSRRQRREFREKRLRGRK) are compositionally biased toward basic residues. Ser-285 and Ser-294 each carry phosphoserine. Residues 290 to 313 (ARRDSPTYDPYKRSPSESSSESRS) show a composition bias toward basic and acidic residues. Thr-327 carries the post-translational modification Phosphothreonine. Ser-331 and Ser-335 each carry phosphoserine. 2 stretches are compositionally biased toward low complexity: residues 340-353 (AAAA…GAAP) and 378-395 (SSSS…SRSS). The segment covering 396-435 (SRSRRGYYRSGRHARSRSRSWSRSRSRSRRYSRSRSRGRR) has biased composition (basic residues). Residues 436–446 (HSDGGSRDGHR) are compositionally biased toward basic and acidic residues. The segment covering 475–486 (RGARGPRHHSSS) has biased composition (basic residues). Low complexity-rich tracts occupy residues 487 to 510 (HSRS…SRSQ) and 518 to 527 (QSHSQSQSHS). Ser-541 is modified (phosphoserine). Thr-567 bears the Phosphothreonine mark. Residues 579–641 (ALNRQFKADK…ERQYSRQSRS (63 aa)) adopt a coiled-coil conformation. Composition is skewed to basic and acidic residues over residues 584–611 (FKAD…ELRA) and 619–635 (KERE…ERQY). The segment covering 636 to 645 (SRQSRSPSPR) has biased composition (low complexity). The span at 653 to 668 (SRRRSRSRSRSPHYRH) shows a compositional bias: basic residues.

Belongs to the splicing factor SR family. In terms of assembly, probably interacts with CLK4. Post-translationally, phosphorylated in vitro by CLK4. Highly expressed in brain. Expressed at intermediate level in lung and liver. In brain, it is expressed in the hippocampus, cerebellum and olfactory bulb.

It is found in the nucleus. Its subcellular location is the nucleoplasm. Its function is as follows. Probably functions as an alternative splicing regulator. May regulate the mRNA splicing of genes such as CLK1. May act by regulating members of the CLK kinase family. This is CLK4-associating serine/arginine rich protein (Clasrp) from Mus musculus (Mouse).